A 329-amino-acid polypeptide reads, in one-letter code: Ethylene-responsive transcription factor ERF117 (329 aa).

Disordered regions lie at residues 25-51 (DATD…KPPK) and 71-90 (NSTG…FKGV). The span at 71-86 (NSTGNKAAGNRKTSSG) shows a compositional bias: polar residues. The AP2/ERF DNA-binding region spans 86–143 (GFKGVRRRPWGKFAAEIRNPFEKKRKWLGTFPTEEEAAEAYQKSKREFDERLGLVKQE).

It belongs to the AP2/ERF transcription factor family. ERF subfamily.

It localises to the nucleus. Probably acts as a transcriptional activator. Binds to the GCC-box pathogenesis-related promoter element. May be involved in the regulation of gene expression by stress factors and by components of stress signal transduction pathways. The chain is Ethylene-responsive transcription factor ERF117 (ERF117) from Arabidopsis thaliana (Mouse-ear cress).